A 134-amino-acid polypeptide reads, in one-letter code: MAEQSDKDVKYYTLEEIQKHKDSKSTWVILHHKVYDLTKFLEEHPGGEEVLREQAGGDATENFEDVGHSTDARELSKTYIIGELHPDDRSKIAKPSETLITTVESNSSWWTNWVIPAISALVVALMYRLYMAED.

Ala-2 carries the N-acetylalanine modification. N6-acetyllysine occurs at positions 7, 10, and 19. The region spanning 9–85 (VKYYTLEEIQ…SKTYIIGELH (77 aa)) is the Cytochrome b5 heme-binding domain. The heme site is built by His-44 and His-68. Residues 109-131 (WWTNWVIPAISALVVALMYRLYM) form a helical membrane-spanning segment.

Belongs to the cytochrome b5 family.

The protein localises to the endoplasmic reticulum membrane. It is found in the microsome membrane. Cytochrome b5 is a membrane-bound hemoprotein functioning as an electron carrier for several membrane-bound oxygenases. It is also involved in several steps of the sterol biosynthesis pathway, particularly in the C-6 double bond introduction during the C-6 desaturation. The chain is Cytochrome b5 (Cyb5a) from Rattus norvegicus (Rat).